We begin with the raw amino-acid sequence, 372 residues long: Queuine tRNA-ribosyltransferase (372 aa).

The active-site Proton acceptor is D89. Substrate is bound by residues 89-93 (DSGGF), D161, and G232. Residues 262 to 268 (GIGDLPS) form an RNA binding region. The Nucleophile role is filled by D281. The interval 286 to 290 (TKAAR) is RNA binding; important for wobble base 34 recognition. Zn(2+) contacts are provided by C319, C321, C324, and H351.

The protein belongs to the queuine tRNA-ribosyltransferase family. Homodimer. Within each dimer, one monomer is responsible for RNA recognition and catalysis, while the other monomer binds to the replacement base PreQ1. Zn(2+) serves as cofactor.

It catalyses the reaction 7-aminomethyl-7-carbaguanine + guanosine(34) in tRNA = 7-aminomethyl-7-carbaguanosine(34) in tRNA + guanine. The protein operates within tRNA modification; tRNA-queuosine biosynthesis. Its function is as follows. Catalyzes the base-exchange of a guanine (G) residue with the queuine precursor 7-aminomethyl-7-deazaguanine (PreQ1) at position 34 (anticodon wobble position) in tRNAs with GU(N) anticodons (tRNA-Asp, -Asn, -His and -Tyr). Catalysis occurs through a double-displacement mechanism. The nucleophile active site attacks the C1' of nucleotide 34 to detach the guanine base from the RNA, forming a covalent enzyme-RNA intermediate. The proton acceptor active site deprotonates the incoming PreQ1, allowing a nucleophilic attack on the C1' of the ribose to form the product. After dissociation, two additional enzymatic reactions on the tRNA convert PreQ1 to queuine (Q), resulting in the hypermodified nucleoside queuosine (7-(((4,5-cis-dihydroxy-2-cyclopenten-1-yl)amino)methyl)-7-deazaguanosine). The protein is Queuine tRNA-ribosyltransferase of Chlamydia caviae (strain ATCC VR-813 / DSM 19441 / 03DC25 / GPIC) (Chlamydophila caviae).